Consider the following 244-residue polypeptide: 5-oxoprolinase subunit A (244 aa).

The protein belongs to the LamB/PxpA family. As to quaternary structure, forms a complex composed of PxpA, PxpB and PxpC.

It catalyses the reaction 5-oxo-L-proline + ATP + 2 H2O = L-glutamate + ADP + phosphate + H(+). Its function is as follows. Catalyzes the cleavage of 5-oxoproline to form L-glutamate coupled to the hydrolysis of ATP to ADP and inorganic phosphate. The chain is 5-oxoprolinase subunit A from Salmonella newport (strain SL254).